The sequence spans 120 residues: Large ribosomal subunit protein bL12 (120 aa).

The protein belongs to the bacterial ribosomal protein bL12 family. Homodimer. Part of the ribosomal stalk of the 50S ribosomal subunit. Forms a multimeric L10(L12)X complex, where L10 forms an elongated spine to which 2 to 4 L12 dimers bind in a sequential fashion. Binds GTP-bound translation factors.

In terms of biological role, forms part of the ribosomal stalk which helps the ribosome interact with GTP-bound translation factors. Is thus essential for accurate translation. In Aeromonas salmonicida (strain A449), this protein is Large ribosomal subunit protein bL12.